A 116-amino-acid polypeptide reads, in one-letter code: Venom protein 54.1 (116 aa).

A signal peptide spans 1–19 (MNFQVFSLIFFNFVYYCSC).

In terms of processing, contains 3 disulfide bonds. In terms of tissue distribution, expressed by the venom gland.

The protein resides in the secreted. This chain is Venom protein 54.1, found in Lychas mucronatus (Chinese swimming scorpion).